A 421-amino-acid polypeptide reads, in one-letter code: SH2 domain-containing protein 4A (421 aa).

Serine 117 and serine 123 each carry phosphoserine. A disordered region spans residues 132–271; the sequence is DLQAMKKTEP…FLQPLGIPPK (140 aa). Composition is skewed to basic and acidic residues over residues 163–201 and 211–230; these read TRKD…KEDS and KAAD…DYKR. A Phosphoserine modification is found at serine 232. The SH2 domain maps to 315–407; that stretch reads WFHGILTLKK…LGKELLLYPC (93 aa).

In terms of assembly, interacts with ESR1. In the kidney, expressed only in the glomerulus. Expressed in T-cells, B-cells, macrophages and dendritic cells (at protein level). In adult, highest levels are found in muscle and lung with lower levels in kidney.

It is found in the cytoplasm. Functionally, inhibits estrogen-induced cell proliferation by competing with PLCG for binding to ESR1, blocking the effect of estrogen on PLCG and repressing estrogen-induced proliferation. May play a role in T-cell development and function. In Mus musculus (Mouse), this protein is SH2 domain-containing protein 4A (Sh2d4a).